The following is a 509-amino-acid chain: MELEAKLHEIRKPIMVLGTSSGAGKSLTVTAICRILKNLGEEPIPFKGQNMSNNAWVDWEGGEMAYSQALQAFACGINPSAEMNPILLKPQGNSISEVIHLGKSIGITTASNYYKDWFIPGWEVIKKSLSSIYEKTPNCRLIIEGAGSPVEMNLIHRDLTNLRVAKYLNANCILVTDIERGGVFAQIIGTLELMKPEEKKLIKGIIINRFRGDLSLFAEGKKWIESKTQIPIIGIIPWLNDSFPPEDSLDLLEKKSRHTTAEIKVGIIKLPSISNFSDFDPLENEKSILIEWVRESQNLKKFDFIILPGSKQTIKDQIYLKESGLSQDIKEYSNNKGNIIGICGGLQMLGTSLEDPFFKEGSKSCLEQKIKGIGLLPLKTTFFEKKLTRQISSESLWPCHSKINGFEIHNGKTELVESENLLKIRPIFKDLDLGWYTEKKEGGTIAGTYIHGIFENDNWRDQYINLIRKSKNLPIFNKKSISYKKKRESIIDNLANEFDKHLNITSLLN.

The 198-residue stretch at 262-459 (EIKVGIIKLP…IHGIFENDNW (198 aa)) folds into the GATase cobBQ-type domain. The active-site Nucleophile is the Cys343. Residue His451 is part of the active site.

Belongs to the CobB/CobQ family. CobQ subfamily.

The protein operates within cofactor biosynthesis; adenosylcobalamin biosynthesis. Its function is as follows. Catalyzes amidations at positions B, D, E, and G on adenosylcobyrinic A,C-diamide. NH(2) groups are provided by glutamine, and one molecule of ATP is hydrogenolyzed for each amidation. This chain is Cobyric acid synthase, found in Prochlorococcus marinus (strain AS9601).